Consider the following 288-residue polypeptide: MAAGKEIRGKIKSVENTKKITKAMEMVAASKMRKAQDRMRAARPYAEKVRNIAAHLGEANPEYVHPFMKANDAKAAGIIVVTTDKGLCGGMNTNVLRAVTTKLRELQSTGVDVQSVAIGNKGLGFLNRVGAKVVAHATGLGDTPHLDKLIGPVKVLLDAYAEGKINAVYLSYTKFINTMKQESVVEQLLPLSSEQMQAQKTGHGWDYIYEPDAQSVIDELLVRYVESLIYQAVAENMASEQSARMVAMKAATDNAGNVINELKLVYNKTRQAAITKELSEIVAGAAAV.

The protein belongs to the ATPase gamma chain family. F-type ATPases have 2 components, CF(1) - the catalytic core - and CF(0) - the membrane proton channel. CF(1) has five subunits: alpha(3), beta(3), gamma(1), delta(1), epsilon(1). CF(0) has three main subunits: a, b and c.

It localises to the cell inner membrane. Functionally, produces ATP from ADP in the presence of a proton gradient across the membrane. The gamma chain is believed to be important in regulating ATPase activity and the flow of protons through the CF(0) complex. The polypeptide is ATP synthase gamma chain (Acidovorax ebreus (strain TPSY) (Diaphorobacter sp. (strain TPSY))).